We begin with the raw amino-acid sequence, 212 residues long: Chloramphenicol acetyltransferase (212 aa).

The active-site Proton acceptor is the H186.

Belongs to the chloramphenicol acetyltransferase family. In terms of assembly, homotrimer.

It catalyses the reaction chloramphenicol + acetyl-CoA = chloramphenicol 3-acetate + CoA. In terms of biological role, this enzyme is an effector of chloramphenicol resistance in bacteria. The sequence is that of Chloramphenicol acetyltransferase (catD) from Clostridioides difficile (Peptoclostridium difficile).